The following is a 218-amino-acid chain: MGQKINPLGFRLGTTQGHHSLWFSQPKNYSESLQEDQKIRNFIKNYVQKNMITSSGVTGIARIDIQKGIDLIKVIIFMGFPKLLIENRPRATEELQMTLQKELNCVNRKLNIAITRIAKPYGNPKILAEFIAGQLKNRVSFRKAMKKAIELAEKADTKGIQVQIAGRIDGKEIARVEWIREGRVPRQTIRAKIDYCSYPVRTIYGVLGIKIWIFLDEA.

In terms of domain architecture, KH type-2 spans 39-118; it reads IRNFIKNYVQ…KLNIAITRIA (80 aa).

It belongs to the universal ribosomal protein uS3 family. Part of the 30S ribosomal subunit.

It localises to the plastid. It is found in the chloroplast. In Ipomoea purpurea (Common morning glory), this protein is Small ribosomal subunit protein uS3c (rps3).